A 98-amino-acid chain; its full sequence is NADH-ubiquinone oxidoreductase chain 4L (98 aa).

3 helical membrane-spanning segments follow: residues 1–21, 29–49, and 61–81; these read MSLTYMNILVAFVISLTGLLM, SLLCLEGMMLSLFVMVTITIL, and IILLVFAACEAALGLALLVMV.

Belongs to the complex I subunit 4L family. In terms of assembly, core subunit of respiratory chain NADH dehydrogenase (Complex I) which is composed of 45 different subunits.

The protein localises to the mitochondrion inner membrane. It carries out the reaction a ubiquinone + NADH + 5 H(+)(in) = a ubiquinol + NAD(+) + 4 H(+)(out). Functionally, core subunit of the mitochondrial membrane respiratory chain NADH dehydrogenase (Complex I) which catalyzes electron transfer from NADH through the respiratory chain, using ubiquinone as an electron acceptor. Part of the enzyme membrane arm which is embedded in the lipid bilayer and involved in proton translocation. In Mystacina tuberculata (New Zealand lesser short-tailed bat), this protein is NADH-ubiquinone oxidoreductase chain 4L (MT-ND4L).